The sequence spans 86 residues: U-actitoxin-Avd10a (86 aa).

The first 20 residues, 1–20, serve as a signal peptide directing secretion; it reads MSRIAILLFVAFLLVAGISA. Positions 21 to 42 are excised as a propeptide; that stretch reads KSTAHFKKNVLADLFKERRFNA. The ShKT domain maps to 51-86; it reads CVNIDVDSFCDGMAERGACNIIPQMATNCAKACNSC. Cystine bridges form between cysteine 51–cysteine 86, cysteine 60–cysteine 79, and cysteine 69–cysteine 83.

It belongs to the sea anemone type 1 potassium channel toxin family. Type 1b subfamily.

The protein resides in the secreted. Its subcellular location is the nematocyst. Inhibits voltage-gated potassium channels (Kv1/KCNA). The polypeptide is U-actitoxin-Avd10a (Anemonia viridis (Snakelocks anemone)).